The chain runs to 166 residues: Ribosome maturation factor RimM (166 aa).

Residues 94–165 (EGEYYLGKLI…TIELKVLDLL (72 aa)) form the PRC barrel domain.

The protein belongs to the RimM family. In terms of assembly, binds ribosomal protein uS19.

The protein resides in the cytoplasm. Its function is as follows. An accessory protein needed during the final step in the assembly of 30S ribosomal subunit, possibly for assembly of the head region. Essential for efficient processing of 16S rRNA. May be needed both before and after RbfA during the maturation of 16S rRNA. It has affinity for free ribosomal 30S subunits but not for 70S ribosomes. The chain is Ribosome maturation factor RimM from Borreliella afzelii (strain PKo) (Borrelia afzelii).